We begin with the raw amino-acid sequence, 540 residues long: Chaperonin GroEL (540 aa).

ATP-binding positions include 29-32 (TLGP), 86-90 (DGTTT), glycine 413, 476-478 (NAA), and aspartate 492.

The protein belongs to the chaperonin (HSP60) family. Forms a cylinder of 14 subunits composed of two heptameric rings stacked back-to-back. Interacts with the co-chaperonin GroES.

It is found in the cytoplasm. The enzyme catalyses ATP + H2O + a folded polypeptide = ADP + phosphate + an unfolded polypeptide.. Its function is as follows. Together with its co-chaperonin GroES, plays an essential role in assisting protein folding. The GroEL-GroES system forms a nano-cage that allows encapsulation of the non-native substrate proteins and provides a physical environment optimized to promote and accelerate protein folding. This is Chaperonin GroEL from Streptococcus anginosus.